Reading from the N-terminus, the 1239-residue chain is Inner tegument protein (1239 aa).

Positions 1 to 10 (MASAMESDSS) are enriched in low complexity. Disordered stretches follow at residues 1–20 (MASA…DAQP), 672–708 (GESP…GGPW), and 1090–1239 (GRNA…AEDE). The segment at 618-1239 (NELPKTRSLA…RPPRPTAEDE (622 aa)) is interaction with large tegument protein. The segment covering 1115–1126 (DSSPFSFSSSDF) has biased composition (low complexity). Acidic residues predominate over residues 1127–1136 (SDQDEGEGGE). Residues 1181–1190 (RTTPSPSRRA) show a composition bias toward low complexity. The span at 1219–1232 (VRPRTRRGATRRPP) shows a compositional bias: basic residues.

The protein belongs to the herpesviridae inner tegument protein family. In terms of assembly, interacts (via C-terminus) with the large tegument protein/LTP (via N-terminus).

Its subcellular location is the virion tegument. It is found in the host cytoplasm. It localises to the host nucleus. The protein localises to the host Golgi apparatus. The protein resides in the host trans-Golgi network. Functionally, plays an essential role in cytoplasmic secondary envelopment during viral egress. Interacts with the capsid via the large tegument protein/LTP and participates in its transport to the host trans-Golgi network (TGN) where secondary envelopment occurs. Modulates tegumentation and capsid accumulation at the viral assembly complex. In Homo sapiens (Human), this protein is Inner tegument protein.